The primary structure comprises 187 residues: Photosystem I assembly protein Ycf4 (187 aa).

Transmembrane regions (helical) follow at residues 25 to 45 (YLWA…GISS) and 69 to 89 (MSFY…TVIW).

The protein belongs to the Ycf4 family.

It localises to the cellular thylakoid membrane. Its function is as follows. Seems to be required for the assembly of the photosystem I complex. In Trichodesmium erythraeum (strain IMS101), this protein is Photosystem I assembly protein Ycf4.